The sequence spans 248 residues: Ribosomal RNA small subunit methyltransferase J (248 aa).

Residues 98-99 (RD), 114-115 (ER), 150-151 (SS), and Asp168 contribute to the S-adenosyl-L-methionine site.

This sequence belongs to the methyltransferase superfamily. RsmJ family.

It is found in the cytoplasm. The enzyme catalyses guanosine(1516) in 16S rRNA + S-adenosyl-L-methionine = N(2)-methylguanosine(1516) in 16S rRNA + S-adenosyl-L-homocysteine + H(+). Specifically methylates the guanosine in position 1516 of 16S rRNA. The protein is Ribosomal RNA small subunit methyltransferase J of Shewanella denitrificans (strain OS217 / ATCC BAA-1090 / DSM 15013).